A 144-amino-acid chain; its full sequence is Large ribosomal subunit protein uL15 (144 aa).

The segment at 1–58 is disordered; that stretch reads MRLNTLSPAAGSKPSKKRVGRGIGSGLGKTGGRGHKGQKSRSGGSVRPGFEGGQMPLK. Over residues 21–31 the composition is skewed to gly residues; sequence RGIGSGLGKTG.

It belongs to the universal ribosomal protein uL15 family. As to quaternary structure, part of the 50S ribosomal subunit.

Its function is as follows. Binds to the 23S rRNA. This chain is Large ribosomal subunit protein uL15, found in Vibrio atlanticus (strain LGP32) (Vibrio splendidus (strain Mel32)).